We begin with the raw amino-acid sequence, 287 residues long: Beta-lactamase GES-5 (287 aa).

A signal peptide spans 1 to 18; the sequence is MRFIHALLLAGIAHSAYA. Cysteines 63 and 233 form a disulfide. The active-site Nucleophile; acyl-ester intermediate is S64. Positions 64, 125, 127, 230, 232, and 238 each coordinate imipenem.

This sequence belongs to the class-A beta-lactamase family.

The protein localises to the secreted. It carries out the reaction a beta-lactam + H2O = a substituted beta-amino acid. Its activity is regulated as follows. Inhibited by the beta-lactamase-blocking agents clavulanic acid, sulbactam and tazobactam, via a covalent binding to Ser-64. Confers resistance to penicillins, cephalosporins and carbapenems. Has carbapenem-hydrolyzing activity. The chain is Beta-lactamase GES-5 from Klebsiella pneumoniae.